The primary structure comprises 431 residues: Enolase (431 aa).

Glutamine 163 is a binding site for (2R)-2-phosphoglycerate. Glutamate 205 functions as the Proton donor in the catalytic mechanism. The Mg(2+) site is built by aspartate 242, glutamate 288, and aspartate 315. (2R)-2-phosphoglycerate-binding residues include lysine 340, arginine 369, serine 370, and lysine 391. The active-site Proton acceptor is the lysine 340.

The protein belongs to the enolase family. It depends on Mg(2+) as a cofactor.

Its subcellular location is the cytoplasm. The protein resides in the secreted. It is found in the cell surface. It catalyses the reaction (2R)-2-phosphoglycerate = phosphoenolpyruvate + H2O. Its pathway is carbohydrate degradation; glycolysis; pyruvate from D-glyceraldehyde 3-phosphate: step 4/5. Catalyzes the reversible conversion of 2-phosphoglycerate (2-PG) into phosphoenolpyruvate (PEP). It is essential for the degradation of carbohydrates via glycolysis. The polypeptide is Enolase (Bacillus cereus (strain G9842)).